The sequence spans 417 residues: Imidazolonepropionase (417 aa).

The Fe(3+) site is built by H77 and H79. Positions 77 and 79 each coordinate Zn(2+). 4-imidazolone-5-propanoate-binding residues include R86, Y149, and H182. Residue Y149 participates in N-formimidoyl-L-glutamate binding. H247 contributes to the Fe(3+) binding site. Zn(2+) is bound at residue H247. Q250 lines the 4-imidazolone-5-propanoate pocket. D322 is a Fe(3+) binding site. Residue D322 coordinates Zn(2+). N324 and G326 together coordinate N-formimidoyl-L-glutamate. Position 327 (T327) interacts with 4-imidazolone-5-propanoate.

It belongs to the metallo-dependent hydrolases superfamily. HutI family. Zn(2+) is required as a cofactor. Requires Fe(3+) as cofactor.

It is found in the cytoplasm. The catalysed reaction is 4-imidazolone-5-propanoate + H2O = N-formimidoyl-L-glutamate. It participates in amino-acid degradation; L-histidine degradation into L-glutamate; N-formimidoyl-L-glutamate from L-histidine: step 3/3. Its function is as follows. Catalyzes the hydrolytic cleavage of the carbon-nitrogen bond in imidazolone-5-propanoate to yield N-formimidoyl-L-glutamate. It is the third step in the universal histidine degradation pathway. This chain is Imidazolonepropionase, found in Cupriavidus necator (strain ATCC 17699 / DSM 428 / KCTC 22496 / NCIMB 10442 / H16 / Stanier 337) (Ralstonia eutropha).